A 193-amino-acid polypeptide reads, in one-letter code: 7-methyl-GTP pyrophosphatase (193 aa).

Aspartate 70 acts as the Proton acceptor in catalysis.

This sequence belongs to the Maf family. YceF subfamily. A divalent metal cation is required as a cofactor.

The protein localises to the cytoplasm. It catalyses the reaction N(7)-methyl-GTP + H2O = N(7)-methyl-GMP + diphosphate + H(+). Its function is as follows. Nucleoside triphosphate pyrophosphatase that hydrolyzes 7-methyl-GTP (m(7)GTP). May have a dual role in cell division arrest and in preventing the incorporation of modified nucleotides into cellular nucleic acids. The polypeptide is 7-methyl-GTP pyrophosphatase (Photobacterium profundum (strain SS9)).